We begin with the raw amino-acid sequence, 273 residues long: NAD(P)H-hydrate epimerase (273 aa).

One can recognise a YjeF N-terminal domain in the interval 18-257 (ALKLDEDLIN…LLAMEYDVQE (240 aa)). 71–75 (NNGGD) is a (6S)-NADPHX binding site. Positions 72 and 146 each coordinate K(+). Residues 150-157 (GFSFHGGP), Tyr-162, and Asp-188 contribute to the (6S)-NADPHX site. Ser-191 provides a ligand contact to K(+).

It belongs to the NnrE/AIBP family. K(+) serves as cofactor.

The catalysed reaction is (6R)-NADHX = (6S)-NADHX. The enzyme catalyses (6R)-NADPHX = (6S)-NADPHX. Its function is as follows. Catalyzes the epimerization of the S- and R-forms of NAD(P)HX, a damaged form of NAD(P)H that is a result of enzymatic or heat-dependent hydration. This is a prerequisite for the S-specific NAD(P)H-hydrate dehydratase to allow the repair of both epimers of NAD(P)HX. In Giardia intestinalis (strain ATCC 50803 / WB clone C6) (Giardia lamblia), this protein is NAD(P)H-hydrate epimerase.